Here is an 872-residue protein sequence, read N- to C-terminus: Alanine--tRNA ligase (872 aa).

Zn(2+) contacts are provided by H567, H571, C669, and H673.

This sequence belongs to the class-II aminoacyl-tRNA synthetase family. Zn(2+) is required as a cofactor.

The protein localises to the cytoplasm. It carries out the reaction tRNA(Ala) + L-alanine + ATP = L-alanyl-tRNA(Ala) + AMP + diphosphate. Catalyzes the attachment of alanine to tRNA(Ala) in a two-step reaction: alanine is first activated by ATP to form Ala-AMP and then transferred to the acceptor end of tRNA(Ala). Also edits incorrectly charged Ser-tRNA(Ala) and Gly-tRNA(Ala) via its editing domain. The protein is Alanine--tRNA ligase of Streptococcus pyogenes serotype M28 (strain MGAS6180).